A 32-amino-acid chain; its full sequence is Acatoxin 1 (32 aa).

3 disulfide bridges follow: Cys1–Cys15, Cys8–Cys20, and Cys14–Cys26.

The protein localises to the secreted. It is found in the nematocyst. Reversibly inhibits acid-sensing ion channels (ASIC) in rat dorsal root ganglia neurons. Reversibly inhibits voltage-gated potassium channels (Kv) in rat DRG neurons. In Anthopleura cascaia (Sea anemone), this protein is Acatoxin 1.